We begin with the raw amino-acid sequence, 551 residues long: MSGGEQKPERYYVGVDVGTGSVRAALVDQSGVLLAFADQPIKNWEPQFNHHEQSSEDIWAACCVVTKKVVQGIDLNQIRGLGFDATCSLVVLDKQFHPLPVNQEGDSHRNVIMWLDHRAVSQVNRINETKHSVLQYVGGVMSVEMQAPKLLWLKENLREICWDKAGHFFDLPDFLSWKATGVTARSLCSLVCKWTYSAEKGWDDSFWKMIGLEDFVADNYSKIGNQVLPPGASLGNGLTPEAARDLGLLPGIAVAASLIDAHAGGLGVIGADVRGHGLICEGQPVTSRLAVICGTSSCHMGISKDPIFVPGVWGPYFSAMVPGFWLNEGGQSVTGKLIDHMVQGHAAFPELQVKATARCQSIYAYLNSHLDLIKKAQPVGFLTVDLHVWPDFHGNRSPLADLTLKGMVTGLKLSQDLDDLAILYLATVQAIALGTRFIIEAMEAAGHSISTLFLCGGLSKNPLFVQMHADITGMPVVLSQEVESVLVGAAVLGACASGDFASVQEAMAKMSKVGKVVFPRLQDKKYYDKKYQVFLKLVEHQKEYLAIMNDD.

Belongs to the FGGY kinase family. Expressed in kidney, lung and small intestine and to a lower extent in liver and detected in cerebrospinal fluid (at protein level).

It catalyses the reaction D-ribulose + ATP = D-ribulose 5-phosphate + ADP + H(+). The protein operates within carbohydrate metabolism; pentose and glucuronate interconversion. Catalyzes ATP-dependent phosphorylation of D-ribulose at C-5 to form D-ribulose 5-phosphate. Postulated to function in a metabolite repair mechanism by preventing toxic accumulation of free D-ribulose formed by non-specific phosphatase activities. Alternatively, may play a role in regulating D-ribulose 5-phosphate recycling in the pentose phosphate pathway. Can phosphorylate ribitol with low efficiency. This chain is FGGY carbohydrate kinase domain-containing protein, found in Homo sapiens (Human).